Here is a 270-residue protein sequence, read N- to C-terminus: Urease accessory protein UreD (270 aa).

It belongs to the UreD family. As to quaternary structure, ureD, UreF and UreG form a complex that acts as a GTP-hydrolysis-dependent molecular chaperone, activating the urease apoprotein by helping to assemble the nickel containing metallocenter of UreC. The UreE protein probably delivers the nickel.

It localises to the cytoplasm. Functionally, required for maturation of urease via the functional incorporation of the urease nickel metallocenter. The polypeptide is Urease accessory protein UreD (Actinobacillus pleuropneumoniae serotype 5b (strain L20)).